The following is a 195-amino-acid chain: Imidazoleglycerol-phosphate dehydratase (195 aa).

This sequence belongs to the imidazoleglycerol-phosphate dehydratase family.

It is found in the cytoplasm. The catalysed reaction is D-erythro-1-(imidazol-4-yl)glycerol 3-phosphate = 3-(imidazol-4-yl)-2-oxopropyl phosphate + H2O. It functions in the pathway amino-acid biosynthesis; L-histidine biosynthesis; L-histidine from 5-phospho-alpha-D-ribose 1-diphosphate: step 6/9. The protein is Imidazoleglycerol-phosphate dehydratase of Parafrankia sp. (strain EAN1pec).